We begin with the raw amino-acid sequence, 275 residues long: Membrane protein insertase YidC 2 (275 aa).

The first 21 residues, 1 to 21, serve as a signal peptide directing secretion; the sequence is MKKKNIILISVLLGALLLLTG. Residue cysteine 22 is the site of N-palmitoyl cysteine attachment. The S-diacylglycerol cysteine moiety is linked to residue cysteine 22. A run of 4 helical transmembrane segments spans residues 48 to 68, 133 to 153, 174 to 194, and 212 to 232; these read FVAK…TLLI, QMGC…YYAI, MVLA…SMIG, and IMIL…WAVG.

Belongs to the OXA1/ALB3/YidC family. Type 2 subfamily.

It is found in the cell membrane. Required for the insertion and/or proper folding and/or complex formation of integral membrane proteins into the membrane. Involved in integration of membrane proteins that insert both dependently and independently of the Sec translocase complex, as well as at least some lipoproteins. The polypeptide is Membrane protein insertase YidC 2 (Listeria monocytogenes serotype 4b (strain F2365)).